Here is a 381-residue protein sequence, read N- to C-terminus: Cytochrome b (381 aa).

Transmembrane regions (helical) follow at residues 38 to 58, 82 to 103, 118 to 138, and 183 to 203; these read FGSL…FLAM, WLLR…YFHI, WMTG…GYVL, and FFTF…IHLL. Residues His-88 and His-102 each coordinate heme b. Heme b is bound by residues His-187 and His-201. His-206 is a binding site for a ubiquinone. Transmembrane regions (helical) follow at residues 231-251, 293-313, 325-345, and 352-372; these read IKDT…SLTS, LGGV…PFTF, VAQP…WIGA, and YNFL…FTPI.

This sequence belongs to the cytochrome b family. In terms of assembly, the main subunits of complex b-c1 are: cytochrome b, cytochrome c1 and the Rieske protein. Heme b is required as a cofactor.

Its subcellular location is the mitochondrion inner membrane. Its function is as follows. Component of the ubiquinol-cytochrome c reductase complex (complex III or cytochrome b-c1 complex) that is part of the mitochondrial respiratory chain. The b-c1 complex mediates electron transfer from ubiquinol to cytochrome c. Contributes to the generation of a proton gradient across the mitochondrial membrane that is then used for ATP synthesis. This is Cytochrome b (MT-CYB) from Artemia franciscana (Brine shrimp).